The following is a 133-amino-acid chain: Basic phospholipase A2 beta-bungarotoxin A-AL2 chain (133 aa).

The first 5 residues, 1 to 5 (FLLGA), serve as a signal peptide directing secretion. A propeptide spanning residues 6–13 (ANIPPHPL) is cleaved from the precursor. 6 disulfide bridges follow: Cys40-Cys132, Cys42-Cys58, Cys57-Cys113, Cys64-Cys106, Cys74-Cys99, and Cys92-Cys104. Residues Tyr41, Gly43, and Gly45 each contribute to the Ca(2+) site. Residue His61 is part of the active site. A Ca(2+)-binding site is contributed by Asp62. Asp107 is an active-site residue.

The protein belongs to the phospholipase A2 family. Group I subfamily. D49 sub-subfamily. In terms of assembly, heterodimer; disulfide-linked. The A chains have phospholipase A2 activity and the B chains show homology with the basic protease inhibitors. It depends on Ca(2+) as a cofactor. As to expression, expressed by the venom gland.

The protein localises to the secreted. The catalysed reaction is a 1,2-diacyl-sn-glycero-3-phosphocholine + H2O = a 1-acyl-sn-glycero-3-phosphocholine + a fatty acid + H(+). In terms of biological role, snake venom phospholipase A2 (PLA2) that inhibits neuromuscular transmission by blocking acetylcholine release from the nerve termini. PLA2 catalyzes the calcium-dependent hydrolysis of the 2-acyl groups in 3-sn-phosphoglycerides. The chain is Basic phospholipase A2 beta-bungarotoxin A-AL2 chain from Bungarus multicinctus (Many-banded krait).